The following is a 432-amino-acid chain: Trigger factor (432 aa).

Positions 161 to 246 (EDRVTIDFTG…LKKVEERELP (86 aa)) constitute a PPIase FKBP-type domain.

It belongs to the FKBP-type PPIase family. Tig subfamily.

The protein localises to the cytoplasm. The catalysed reaction is [protein]-peptidylproline (omega=180) = [protein]-peptidylproline (omega=0). Its function is as follows. Involved in protein export. Acts as a chaperone by maintaining the newly synthesized protein in an open conformation. Functions as a peptidyl-prolyl cis-trans isomerase. The polypeptide is Trigger factor (Klebsiella pneumoniae (strain 342)).